We begin with the raw amino-acid sequence, 874 residues long: Alanine--tRNA ligase (874 aa).

Zn(2+)-binding residues include His-562, His-566, Cys-664, and His-668.

Belongs to the class-II aminoacyl-tRNA synthetase family. It depends on Zn(2+) as a cofactor.

The protein resides in the cytoplasm. The enzyme catalyses tRNA(Ala) + L-alanine + ATP = L-alanyl-tRNA(Ala) + AMP + diphosphate. In terms of biological role, catalyzes the attachment of alanine to tRNA(Ala) in a two-step reaction: alanine is first activated by ATP to form Ala-AMP and then transferred to the acceptor end of tRNA(Ala). Also edits incorrectly charged Ser-tRNA(Ala) and Gly-tRNA(Ala) via its editing domain. The chain is Alanine--tRNA ligase from Neisseria meningitidis serogroup A / serotype 4A (strain DSM 15465 / Z2491).